Consider the following 359-residue polypeptide: uncharacterized protein (359 aa).

An N-terminal signal peptide occupies residues Met-1 to Thr-15. The N-acetyltransferase domain occupies Ile-212–Gln-359.

This is an uncharacterized protein from Mycobacterium leprae (strain TN).